A 416-amino-acid polypeptide reads, in one-letter code: Secreted RxLR effector protein 25 (416 aa).

Residues 1-20 (MRSWLLLLVGLSSYFALSTS) form the signal peptide. The RxLR-dEER signature appears at 49–88 (RKLRAPGGDTNTLKDSGKARREKKVWKLFCRVFLQLDDEK).

This sequence belongs to the RxLR effector family.

It localises to the secreted. Its subcellular location is the host cytoplasm. It is found in the host nucleus. Functionally, effector that partially suppresses the tobacco programmed cell death induced by cell death-inducing proteins. This is Secreted RxLR effector protein 25 from Plasmopara viticola (Downy mildew of grapevine).